Reading from the N-terminus, the 204-residue chain is Small heat shock protein, chloroplastic (204 aa).

The segment at 34–55 (QMGRVDHDHELDDRSNRAPISR) is disordered. The span at 37–49 (RVDHDHELDDRSN) shows a compositional bias: basic and acidic residues. The sHSP domain occupies 98-204 (GSGRAMRRGW…KKDVFQVMVD (107 aa)).

It belongs to the small heat shock protein (HSP20) family.

It is found in the plastid. The protein localises to the chloroplast stroma. This chain is Small heat shock protein, chloroplastic (HSP23), found in Oxybasis rubra (Red goosefoot).